Here is a 1391-residue protein sequence, read N- to C-terminus: DNA-directed RNA polymerase subunit beta (1391 aa).

Belongs to the RNA polymerase beta chain family. As to quaternary structure, the RNAP catalytic core consists of 2 alpha, 1 beta, 1 beta' and 1 omega subunit. When a sigma factor is associated with the core the holoenzyme is formed, which can initiate transcription.

The catalysed reaction is RNA(n) + a ribonucleoside 5'-triphosphate = RNA(n+1) + diphosphate. Functionally, DNA-dependent RNA polymerase catalyzes the transcription of DNA into RNA using the four ribonucleoside triphosphates as substrates. This is DNA-directed RNA polymerase subunit beta from Granulibacter bethesdensis (strain ATCC BAA-1260 / CGDNIH1).